A 307-amino-acid chain; its full sequence is Coproporphyrin III ferrochelatase (307 aa).

Residues tyrosine 12, arginine 29, 45–46 (RY), serine 53, and tyrosine 124 contribute to the Fe-coproporphyrin III site. Fe(2+)-binding residues include histidine 181 and glutamate 263.

Belongs to the ferrochelatase family.

It is found in the cytoplasm. The enzyme catalyses Fe-coproporphyrin III + 2 H(+) = coproporphyrin III + Fe(2+). It participates in porphyrin-containing compound metabolism; protoheme biosynthesis. In terms of biological role, involved in coproporphyrin-dependent heme b biosynthesis. Catalyzes the insertion of ferrous iron into coproporphyrin III to form Fe-coproporphyrin III. This chain is Coproporphyrin III ferrochelatase, found in Staphylococcus aureus (strain COL).